A 131-amino-acid polypeptide reads, in one-letter code: Histone H2B.2 (131 aa).

Positions 1 to 19 are enriched in basic and acidic residues; sequence MSSAAEKKPASKAPAEKKP. Residues 1 to 37 are disordered; the sequence is MSSAAEKKPASKAPAEKKPAAKKTSTSVDGKKRSKVR. N6-acetyllysine; alternate occurs at positions 7 and 8. Residues K7 and K8 each participate in a glycyl lysine isopeptide (Lys-Gly) (interchain with G-Cter in SUMO); alternate cross-link. S11 carries the post-translational modification Phosphoserine. K12 is subject to N6-acetyllysine. N6-acetyllysine; alternate occurs at positions 17, 18, 22, and 23. Glycyl lysine isopeptide (Lys-Gly) (interchain with G-Cter in SUMO); alternate cross-links involve residues K17 and K18. Residue K22 is modified to N6-butyryllysine; alternate. At K23 the chain carries N6-methyllysine; alternate. N6-succinyllysine is present on K35. K38 is modified (N6,N6-dimethyllysine). An N6-succinyllysine modification is found at K47. Residue K124 forms a Glycyl lysine isopeptide (Lys-Gly) (interchain with G-Cter in ubiquitin) linkage.

Belongs to the histone H2B family. The nucleosome is a histone octamer containing two molecules each of H2A, H2B, H3 and H4 assembled in one H3-H4 heterotetramer and two H2A-H2B heterodimers. The octamer wraps approximately 147 bp of DNA. Interacts with NAP1. Post-translationally, monoubiquitinated by the RAD6/UBC2-BRE1 complex to form H2BK123ub1. H2BK123ub1 gives a specific tag for epigenetic transcriptional activation and is also prerequisite for H3K4me and H3K79me formation. H2BK123ub1 also modulates the formation of double-strand breaks during meiosis and is a prerequisite for DNA-damage checkpoint activation. Deubiquitination is performed by UBP8 in presence of SGF11. In terms of processing, phosphorylated by STE20 to form H2BS10ph during progression through meiotic prophase. May be correlated with chromosome condensation. H2BS10ph is also formed after H(2)O(2) treatment, and is a step leading to apoptosis. Acetylated by GCN5, a component of the SAGA complex, to form H2BK11ac and H2BK16ac. H2BK16ac can also be formed by ESA1, a component of the NuA4 histone acetyltransferase (HAT) complex. Acetylation of N-terminal lysines and particularly formation of H2BK11acK16ac has a positive effect on transcription. Post-translationally, sumoylation to form H2BK6su or H2BK7su, and probably also H2BK16su or H2BK17su, occurs preferentially near the telomeres and represses gene transcription.

It localises to the nucleus. Its subcellular location is the chromosome. Its function is as follows. Core component of nucleosome. Nucleosomes wrap and compact DNA into chromatin, limiting DNA accessibility to the cellular machineries which require DNA as a template. Histones thereby play a central role in transcription regulation, DNA repair, DNA replication and chromosomal stability. DNA accessibility is regulated via a complex set of post-translational modifications of histones, also called histone code, and nucleosome remodeling. The chain is Histone H2B.2 (HTB2) from Saccharomyces cerevisiae (strain ATCC 204508 / S288c) (Baker's yeast).